The sequence spans 973 residues: Leucine--tRNA ligase, chloroplastic/mitochondrial (973 aa).

Residues 126-135 (PSGAGLHVGH) carry the 'HIGH' region motif. The 'KMSKS' region motif lies at 730–734 (KMSKS). Position 733 (K733) interacts with ATP.

The protein belongs to the class-I aminoacyl-tRNA synthetase family.

The protein resides in the plastid. Its subcellular location is the chloroplast. It localises to the mitochondrion. It catalyses the reaction tRNA(Leu) + L-leucine + ATP = L-leucyl-tRNA(Leu) + AMP + diphosphate. Catalyzes the specific attachment of an amino acid to its cognate tRNA in a two step reaction: the amino acid (AA) is first activated by ATP to form AA-AMP and then transferred to the acceptor end of the tRNA. The sequence is that of Leucine--tRNA ligase, chloroplastic/mitochondrial from Arabidopsis thaliana (Mouse-ear cress).